Reading from the N-terminus, the 395-residue chain is MLNIAALRQQQIPLAAEPRSPVPFHILMKPIGPACNLACRYCYYPQDETPVNKMDDARLEQFIRRYIAAQPAGAREINFVWQGGEPLLAGLSFYKKALALQARYAPDGVTISNSLQTNGTLINDAWCRLFREHGFIIGLGLEGNEALQDYHRPDKRGRSTWSAALRGIDLLHQHQVDFNLLVVVHNEMAAHAAAIYVRLVSLGARYLQFQPLMSEGAALREGYQLSADNWGRFMVGIWRQWRKRCDRGRVFVINIEQAWAQYFTHTSGSCVHSARCGSNLVMESDGQLYACDHLINTEHRLGRLDEQTLAAAVDASVQLPFGQQKSLRRECQTCSVKMVCQGGCPAHLNAAGNNRLCGGYYRFFSDILAPLRPFSRDLNGLKAWRAAFVGTAHTA.

The Radical SAM core domain maps to 18-249; the sequence is PRSPVPFHIL…QWRKRCDRGR (232 aa). [4Fe-4S] cluster-binding residues include cysteine 35 and cysteine 39. S-adenosyl-L-methionine is bound at residue tyrosine 41. Position 42 (cysteine 42) interacts with [4Fe-4S] cluster. Glycine 84 and arginine 152 together coordinate S-adenosyl-L-methionine. Positions 270, 276, and 291 each coordinate [4Fe-4S] cluster. Aspartate 292 acts as the Proton acceptor in catalysis. [4Fe-4S] cluster is bound by residues cysteine 331, cysteine 334, cysteine 340, cysteine 344, and cysteine 357.

This sequence belongs to the radical SAM superfamily. Anaerobic sulfatase-maturating enzyme family. As to quaternary structure, monomer. Interacts with AtsA prior to its export to the periplasm. This interaction depends on the presence of AtsA 'Ser-72'. Binding of SAM to AtsB promotes the formation of a ternary AtsA-AtsB-SAM complex. [4Fe-4S] cluster serves as cofactor.

It is found in the cytoplasm. The catalysed reaction is L-seryl-[sulfatase] + S-adenosyl-L-methionine = 3-oxo-L-alanyl-[sulfatase] + 5'-deoxyadenosine + L-methionine + H(+). It participates in protein modification; sulfatase oxidation. Activity is inhibited by iron chelators. Involved in 'Ser-type' sulfatase maturation under anaerobic conditions. Catalyzes the post-translational modification of serine ('Ser-72' in the arylsulfatase AtsA) into 3-oxoalanine (also known as C(alpha)-formylglycine (FGly)), by a free radical chemical mechanism initiated via the reductive cleavage of S-adenosyl-L-methionine (SAM). Is capable of catalyzing multiple turnovers. In vitro, use of a peptide substrate in which the target serine is changed to cysteine also gives rise to turnover, supporting approximately 4-fold the activity of that observed with the natural substrate. This is Serine-type anaerobic sulfatase-maturating enzyme from Klebsiella pneumoniae.